Reading from the N-terminus, the 211-residue chain is Small ribosomal subunit protein uS3 (211 aa).

The region spanning 38–106 (LRKFIKKAFY…NIELNIIEVK (69 aa)) is the KH type-2 domain.

This sequence belongs to the universal ribosomal protein uS3 family. Part of the 30S ribosomal subunit. Forms a tight complex with proteins S10 and S14.

Functionally, binds the lower part of the 30S subunit head. Binds mRNA in the 70S ribosome, positioning it for translation. The sequence is that of Small ribosomal subunit protein uS3 from Ehrlichia canis (strain Jake).